The primary structure comprises 190 residues: Apolipoprotein M (190 aa).

Positions 1–22 (MFHQVWAALLSLYGLLFNSMNQ) form a signal peptide, not cleaved. Disulfide bonds link cysteine 23–cysteine 169, cysteine 95–cysteine 185, and cysteine 130–cysteine 159. Residues glutamate 138 and arginine 145 each coordinate tetradecanoate.

This sequence belongs to the calycin superfamily. Lipocalin family. Highly divergent. Interacts with LRP2; LRP2 mediates APOM renal uptake and subsequent lysosomal degradation. Expressed by the liver; secreted in plasma.

The protein localises to the secreted. In terms of biological role, probably involved in lipid transport. Can bind sphingosine-1-phosphate, myristic acid, palmitic acid and stearic acid, retinol, all-trans-retinoic acid and 9-cis-retinoic acid. The protein is Apolipoprotein M (Apom) of Mus musculus (Mouse).